Here is a 398-residue protein sequence, read N- to C-terminus: Acetyl-CoA acetyltransferase (398 aa).

An N-acetylserine modification is found at Ser2. Residue Cys91 is the Acyl-thioester intermediate of the active site. CoA-binding residues include Tyr186 and Lys231. A K(+)-binding site is contributed by Tyr186. K(+)-binding residues include Ala248, Ala249, and Ala251. CoA is bound at residue Ser252. Position 350 (Val350) interacts with K(+). Catalysis depends on proton acceptor residues His354 and Cys384.

This sequence belongs to the thiolase-like superfamily. Thiolase family. Homotetramer.

It is found in the cytoplasm. It catalyses the reaction 2 acetyl-CoA = acetoacetyl-CoA + CoA. It functions in the pathway metabolic intermediate biosynthesis; (R)-mevalonate biosynthesis; (R)-mevalonate from acetyl-CoA: step 1/3. Its function is as follows. Acetyl-CoA acetyltransferase; part of the first module of ergosterol biosynthesis pathway that includes the early steps of the pathway, conserved across all eukaryotes, and which results in the formation of mevalonate from acetyl-coenzyme A (acetyl-CoA). In this module, the acetyl-CoA acetyltransferase ERG10 catalyzes the formation of acetoacetyl-CoA. The hydroxymethylglutaryl-CoA synthase ERG13 then condenses acetyl-CoA with acetoacetyl-CoA to form HMG-CoA. The rate-limiting step of the early module is the reduction to mevalonate by the 3-hydroxy-3-methylglutaryl-coenzyme A (HMG-CoA) reductases HMG1 and HMG2 which are derived from a single ancestral HMGR gene by gene duplication. The sequence is that of Acetyl-CoA acetyltransferase from Saccharomyces pastorianus (strain ATCC 76670 / Carlsberg bottom yeast no.2 / CBS 1503 / CLIB 180 / NBRC 10610 / NRRL Y-1525) (Saaz-type lager yeast).